Consider the following 130-residue polypeptide: RxLR effector protein PITG_14783 (130 aa).

The signal sequence occupies residues 1–20 (MRLPYVFAATMATLLVSSNA). Residues 27 to 58 (AMLSSPNEQHQRQLRSHQTPVEDQEPDEERSL) form a disordered region. The short motif at 38-56 (RQLRSHQTPVEDQEPDEER) is the RxLR-dEER element.

This sequence belongs to the RxLR effector family.

It is found in the secreted. The protein localises to the host nucleus. The protein resides in the host cytoplasm. Its function is as follows. Effector that enhances P.infestans colonization of Nicotiana benthamiana leaves. The sequence is that of RxLR effector protein PITG_14783 from Phytophthora infestans (strain T30-4) (Potato late blight agent).